A 256-amino-acid chain; its full sequence is Leucyl/phenylalanyl-tRNA--protein transferase (256 aa).

The disordered stretch occupies residues Met1–Leu21.

The protein belongs to the L/F-transferase family.

It localises to the cytoplasm. It catalyses the reaction N-terminal L-lysyl-[protein] + L-leucyl-tRNA(Leu) = N-terminal L-leucyl-L-lysyl-[protein] + tRNA(Leu) + H(+). It carries out the reaction N-terminal L-arginyl-[protein] + L-leucyl-tRNA(Leu) = N-terminal L-leucyl-L-arginyl-[protein] + tRNA(Leu) + H(+). The enzyme catalyses L-phenylalanyl-tRNA(Phe) + an N-terminal L-alpha-aminoacyl-[protein] = an N-terminal L-phenylalanyl-L-alpha-aminoacyl-[protein] + tRNA(Phe). In terms of biological role, functions in the N-end rule pathway of protein degradation where it conjugates Leu, Phe and, less efficiently, Met from aminoacyl-tRNAs to the N-termini of proteins containing an N-terminal arginine or lysine. This Leptothrix cholodnii (strain ATCC 51168 / LMG 8142 / SP-6) (Leptothrix discophora (strain SP-6)) protein is Leucyl/phenylalanyl-tRNA--protein transferase.